Consider the following 239-residue polypeptide: MTWQRPDGRQPDQLRPIRFHREYTHFAAGSVLAECGQTKVLCTVSVQPGVPRFLEDTGQGWLTAEYRMLPGSTPERQRRELMKLSGRTQEIQRLIGRSLRAALDLQALGERTLVVDADVLQADAGTRTTSITGGFVALVDAVNQLVSKGEIPQSPIRHHVAAVSVGLLEGQPFLDLNYPEDVGAAVDLNVVATEQLELLEVQGTAEEGTLPRPQLNQMLDLAEIGIQQLIEAQRQALAS.

Phosphate contacts are provided by residues arginine 87 and 125–127; that span reads GTR.

This sequence belongs to the RNase PH family. As to quaternary structure, homohexameric ring arranged as a trimer of dimers.

It catalyses the reaction tRNA(n+1) + phosphate = tRNA(n) + a ribonucleoside 5'-diphosphate. In terms of biological role, phosphorolytic 3'-5' exoribonuclease that plays an important role in tRNA 3'-end maturation. Removes nucleotide residues following the 3'-CCA terminus of tRNAs; can also add nucleotides to the ends of RNA molecules by using nucleoside diphosphates as substrates, but this may not be physiologically important. Probably plays a role in initiation of 16S rRNA degradation (leading to ribosome degradation) during starvation. This is Ribonuclease PH from Acaryochloris marina (strain MBIC 11017).